Consider the following 114-residue polypeptide: Large ribosomal subunit protein uL22 (114 aa).

It belongs to the universal ribosomal protein uL22 family. In terms of assembly, part of the 50S ribosomal subunit.

Functionally, this protein binds specifically to 23S rRNA; its binding is stimulated by other ribosomal proteins, e.g. L4, L17, and L20. It is important during the early stages of 50S assembly. It makes multiple contacts with different domains of the 23S rRNA in the assembled 50S subunit and ribosome. Its function is as follows. The globular domain of the protein is located near the polypeptide exit tunnel on the outside of the subunit, while an extended beta-hairpin is found that lines the wall of the exit tunnel in the center of the 70S ribosome. The protein is Large ribosomal subunit protein uL22 of Bacillus licheniformis (strain ATCC 14580 / DSM 13 / JCM 2505 / CCUG 7422 / NBRC 12200 / NCIMB 9375 / NCTC 10341 / NRRL NRS-1264 / Gibson 46).